Consider the following 1100-residue polypeptide: Guanylate cyclase 2G (1100 aa).

Residues 1–43 (MASRARSEPPLEHRFYGGAESHAGHSSLVLTLFVVMLMTCLEA) form the signal peptide. At 44-481 (AKLTVGFHAP…GAGMTASVTA (438 aa)) the chain is on the extracellular side. N-linked (GlcNAc...) asparagine glycosylation is found at Asn55, Asn85, Asn94, Asn418, and Asn443. Residues 482-502 (VIPTVTLLVVASAAAITGLML) traverse the membrane as a helical segment. Residues 503–1100 (WRLRGKVQNH…EEEAKVPEIL (598 aa)) lie on the Cytoplasmic side of the membrane. A Protein kinase domain is found at 549 to 826 (STVKISADCG…PAFPSIKKTL (278 aa)). Positions 901 to 1031 (TIFFSDIVGF…DTVNMASRME (131 aa)) constitute a Guanylate cyclase domain.

The protein belongs to the adenylyl cyclase class-4/guanylyl cyclase family. As to quaternary structure, homooligomer. May interact with NPR1/GC-A. Post-translationally, N-glycosylated. As to expression, expressed in lung, kidney and skeletal muscle. Low levels in intestine.

The protein resides in the cell membrane. It is found in the cytoplasm. It catalyses the reaction GTP = 3',5'-cyclic GMP + diphosphate. This Rattus norvegicus (Rat) protein is Guanylate cyclase 2G (Gucy2g).